Consider the following 692-residue polypeptide: DNA-binding protein RFX2 (692 aa).

Residues 1–26 (MQNSEGGADSPATVALRPAAQPVPAS) form a disordered region. Serine 26 bears the Phosphoserine mark. The RFX-type winged-helix DNA-binding region spans 169 to 244 (TLQWLLDNYE…YHYYGIRLKP (76 aa)). Positions 261–296 (RQQPTHQKPRYRPAQKSDSLGDGSAHSNMHSTPEQA) are disordered. The segment covering 285–294 (AHSNMHSTPE) has biased composition (polar residues). Serine 386 is subject to Phosphoserine. Positions 660-685 (DGHSSEADVDGRSLGEPLVKRERSDP) are enriched in basic and acidic residues. A disordered region spans residues 660–692 (DGHSSEADVDGRSLGEPLVKRERSDPSHPLQGI).

This sequence belongs to the RFX family. As to quaternary structure, homodimer; probably only forms homodimers in testis. Heterodimer; heterodimerizes with RFX1 and RFX3. As to expression, expressed at highest level in testis. Expressed at lower level in thymus. Also expressed in stomach, kidney, liver, brain and heart. Weakly expressed in spleen and lung. Within testis, most abundantly present in spermatocytes: present from pachytene spermatocytes to early spermatids (at protein level). Also present in non-germinal tissues.

It is found in the nucleus. The protein localises to the cytoplasm. Its function is as follows. Transcription factor that acts as a key regulator of spermatogenesis. Acts by regulating expression of genes required for the haploid phase during spermiogenesis, such as genes required for cilium assembly and function. Recognizes and binds the X-box, a regulatory motif with DNA sequence 5'-GTNRCC(0-3N)RGYAAC-3' present on promoters. Probably activates transcription of the testis-specific histone gene H1-6. The polypeptide is DNA-binding protein RFX2 (Rfx2) (Rattus norvegicus (Rat)).